A 299-amino-acid polypeptide reads, in one-letter code: Protoheme IX farnesyltransferase (299 aa).

9 helical membrane passes run 27–47 (VVALMLLTSVVGMSLAPHEHF), 53–73 (LIALVGIALMAGSAAAFNHLI), 97–117 (FNVLLFALLIGSLGFLSLMLW), 121–141 (LTAYLTFASLLGYAVVYTLYL), 149–169 (IVIAGIAGAMPPLLGWTSITG), 175–195 (AWLLVMIIFIWTPPHFWALAI), 222–242 (ILLYAILLALVCMLPVLVGMA), 244–264 (YLYLFSALVLNVCFVRYAIKL), and 273–293 (AIEMFRFSIYFLLLLFCALLL).

It belongs to the UbiA prenyltransferase family. Protoheme IX farnesyltransferase subfamily.

Its subcellular location is the cell inner membrane. The enzyme catalyses heme b + (2E,6E)-farnesyl diphosphate + H2O = Fe(II)-heme o + diphosphate. The protein operates within porphyrin-containing compound metabolism; heme O biosynthesis; heme O from protoheme: step 1/1. In terms of biological role, converts heme B (protoheme IX) to heme O by substitution of the vinyl group on carbon 2 of heme B porphyrin ring with a hydroxyethyl farnesyl side group. The protein is Protoheme IX farnesyltransferase of Vibrio vulnificus (strain YJ016).